The primary structure comprises 462 residues: Nitrogenase molybdenum-iron protein beta chain (462 aa).

[8Fe-7S] cluster-binding residues include C21, C46, C104, and S145.

Belongs to the NifD/NifK/NifE/NifN family. Tetramer of two alpha and two beta chains. Forms complex with the iron protein (nitrogenase component 2). Requires [8Fe-7S] cluster as cofactor.

The catalysed reaction is N2 + 8 reduced [2Fe-2S]-[ferredoxin] + 16 ATP + 16 H2O = H2 + 8 oxidized [2Fe-2S]-[ferredoxin] + 2 NH4(+) + 16 ADP + 16 phosphate + 6 H(+). Its function is as follows. This molybdenum-iron protein is part of the nitrogenase complex that catalyzes the key enzymatic reactions in nitrogen fixation. The protein is Nitrogenase molybdenum-iron protein beta chain (nifK) of Methanococcus maripaludis (Methanococcus deltae).